The primary structure comprises 177 residues: UPF0200 protein STK_09500 (177 aa).

11-18 (GMPGSGKG) lines the ATP pocket.

The protein belongs to the UPF0200 family.

The protein is UPF0200 protein STK_09500 of Sulfurisphaera tokodaii (strain DSM 16993 / JCM 10545 / NBRC 100140 / 7) (Sulfolobus tokodaii).